Here is a 333-residue protein sequence, read N- to C-terminus: MVRMTAVCTAKTVSPVPSTRKELKGAIAELRKKLNAVILAHYYQDPEIQDIADFIGDSLELSRRAASTNADVIVFCGVHFMAETAKILSPEKIVLLPDLEAGCSLADDCPADEFAAFRDKHPDHIVVSYINCTAAVKAQSDLICTSSNAVELVNQLPKDQPILFAPDQNLGRWVQKQSGRKLTIWPGRCMVHETFSEEALLKLKIMHPEAKVIAHPECLENLLELADYIGSTSKLLEFTEISSCTKFIVLTEPGILHQMKLKNPKKEFMDVPGIDGCSCNECPYMRLNTLEKLWSCLSTMKPSIEIEEGVRQKAFIPIQRMLNMKETQEASEH.

Residues H41 and S58 each contribute to the iminosuccinate site. C103 is a binding site for [4Fe-4S] cluster. Iminosuccinate-binding positions include 129 to 131 (YIN) and S146. C189 is a binding site for [4Fe-4S] cluster. Iminosuccinate contacts are provided by residues 215–217 (HPE) and T232. Residue C282 participates in [4Fe-4S] cluster binding.

Belongs to the quinolinate synthase family. Type 2 subfamily. [4Fe-4S] cluster is required as a cofactor.

It localises to the cytoplasm. The enzyme catalyses iminosuccinate + dihydroxyacetone phosphate = quinolinate + phosphate + 2 H2O + H(+). It participates in cofactor biosynthesis; NAD(+) biosynthesis; quinolinate from iminoaspartate: step 1/1. Its function is as follows. Catalyzes the condensation of iminoaspartate with dihydroxyacetone phosphate to form quinolinate. This is Quinolinate synthase from Prochlorococcus marinus (strain MIT 9313).